A 534-amino-acid polypeptide reads, in one-letter code: Arginine--tRNA ligase (534 aa).

A 'HIGH' region motif is present at residues 120–130 (ANPTGFLHLGH).

Belongs to the class-I aminoacyl-tRNA synthetase family. As to quaternary structure, monomer.

The protein resides in the cytoplasm. It carries out the reaction tRNA(Arg) + L-arginine + ATP = L-arginyl-tRNA(Arg) + AMP + diphosphate. In Mesomycoplasma hyopneumoniae (strain 232) (Mycoplasma hyopneumoniae), this protein is Arginine--tRNA ligase.